The primary structure comprises 869 residues: Phenylalanine--tRNA ligase beta subunit (869 aa).

The region spanning serine 41–glutamate 162 is the tRNA-binding domain. The region spanning proline 443 to isoleucine 519 is the B5 domain. Mg(2+) is bound by residues aspartate 497, aspartate 503, glutamate 506, and glutamate 507. The region spanning serine 776–arginine 868 is the FDX-ACB domain.

It belongs to the phenylalanyl-tRNA synthetase beta subunit family. Type 1 subfamily. Tetramer of two alpha and two beta subunits. It depends on Mg(2+) as a cofactor.

The protein localises to the cytoplasm. It carries out the reaction tRNA(Phe) + L-phenylalanine + ATP = L-phenylalanyl-tRNA(Phe) + AMP + diphosphate + H(+). The protein is Phenylalanine--tRNA ligase beta subunit of Bifidobacterium longum (strain NCC 2705).